Here is a 702-residue protein sequence, read N- to C-terminus: Pentatricopeptide repeat-containing protein At4g16390, chloroplastic (702 aa).

The N-terminal 53 residues, 1-53 (MSFHHLCSSPSSLLHDPLPLCNLLSVYPKSTPRSFLSSYNPNSSHFHSRNLLQ), are a transit peptide targeting the chloroplast. PPR repeat units follow at residues 174–208 (EVIL…GIKP), 209–243 (DNAT…GCEP), 244–278 (DNVT…KWRI), 279–313 (DAVT…GVKP), 314–348 (NLVI…GFTP), 349–383 (NWST…GLSL), 384–414 (TVIL…MKNC), 420–454 (DSWT…GFEP), and 455–489 (TLFV…GITP). Residues 603-688 (LHLKSLSLGA…WFLTTSVAAK (86 aa)) enclose the Smr domain.

The protein belongs to the PPR family. P subfamily. In terms of tissue distribution, expressed in leaves and flowers and at lower levels in stems and flower buds.

Its subcellular location is the plastid. The protein resides in the chloroplast. Functionally, involved in chloroplast RNA processing. Can bind RNA. Involved in chloroplast development. Involved in chloroplast ribosomal RNA (rRNA) processing and/or translation. Required for FtsH-mediated chloroplast biogenesis. Involved in translation and accumulation of chloroplast ATP synthase subunits. The polypeptide is Pentatricopeptide repeat-containing protein At4g16390, chloroplastic (Arabidopsis thaliana (Mouse-ear cress)).